The primary structure comprises 358 residues: Transcription factor bHLH67 (358 aa).

Positions 125–176 (NMTLPSSTSSPLSAHSRRKRKINHLLPQEMTREKRKRRKTKPSKNNEEIENQ) are disordered. A compositionally biased stretch (low complexity) spans 127–137 (TLPSSTSSPLS). Residues 157 to 166 (EKRKRRKTKP) show a composition bias toward basic residues. The region spanning 175–226 (NQRINHIAVERNRRRQMNEHINSLRALLPPSYIQRGDQASIVGGAINYVKVL) is the bHLH domain.

In terms of assembly, homodimer. As to expression, expressed constitutively in roots, leaves, stems, and flowers.

The protein localises to the nucleus. In Arabidopsis thaliana (Mouse-ear cress), this protein is Transcription factor bHLH67 (BHLH67).